Here is a 215-residue protein sequence, read N- to C-terminus: Cytochrome b6 (215 aa).

The helical transmembrane segment at 32–52 (IFYCLGGITLTCFLVQVATGF) threads the bilayer. Residue cysteine 35 coordinates heme c. Positions 86 and 100 each coordinate heme b. Helical transmembrane passes span 90 to 110 (ASMM…TGGF), 116 to 136 (LTWV…VTGY), and 186 to 206 (LHTF…FPMI). Residues histidine 187 and histidine 202 each contribute to the heme b site.

It belongs to the cytochrome b family. PetB subfamily. In terms of assembly, the 4 large subunits of the cytochrome b6-f complex are cytochrome b6, subunit IV (17 kDa polypeptide, PetD), cytochrome f and the Rieske protein, while the 4 small subunits are PetG, PetL, PetM and PetN. The complex functions as a dimer. Heme b serves as cofactor. Requires heme c as cofactor.

The protein resides in the plastid. It localises to the chloroplast thylakoid membrane. In terms of biological role, component of the cytochrome b6-f complex, which mediates electron transfer between photosystem II (PSII) and photosystem I (PSI), cyclic electron flow around PSI, and state transitions. This chain is Cytochrome b6, found in Cucumis sativus (Cucumber).